Consider the following 173-residue polypeptide: Ribonuclease H (173 aa).

A disordered region spans residues 1-20; that stretch reads MKATSKAKTHPPGATAAKDP. Positions 20 to 162 constitute an RNase H type-1 domain; it reads PQKQVIIYTD…CDVLSKEAAG (143 aa). Mg(2+) contacts are provided by Asp-29, Glu-67, Asp-89, and Asp-154.

Belongs to the RNase H family. As to quaternary structure, monomer. Requires Mg(2+) as cofactor.

Its subcellular location is the cytoplasm. The enzyme catalyses Endonucleolytic cleavage to 5'-phosphomonoester.. In terms of biological role, endonuclease that specifically degrades the RNA of RNA-DNA hybrids. The chain is Ribonuclease H from Syntrophus aciditrophicus (strain SB).